Here is a 241-residue protein sequence, read N- to C-terminus: 1-(5-phosphoribosyl)-5-[(5-phosphoribosylamino)methylideneamino] imidazole-4-carboxamide isomerase (241 aa).

Residue Asp8 is the Proton acceptor of the active site. Catalysis depends on Asp129, which acts as the Proton donor.

It belongs to the HisA/HisF family.

Its subcellular location is the cytoplasm. It carries out the reaction 1-(5-phospho-beta-D-ribosyl)-5-[(5-phospho-beta-D-ribosylamino)methylideneamino]imidazole-4-carboxamide = 5-[(5-phospho-1-deoxy-D-ribulos-1-ylimino)methylamino]-1-(5-phospho-beta-D-ribosyl)imidazole-4-carboxamide. It participates in amino-acid biosynthesis; L-histidine biosynthesis; L-histidine from 5-phospho-alpha-D-ribose 1-diphosphate: step 4/9. The protein is 1-(5-phosphoribosyl)-5-[(5-phosphoribosylamino)methylideneamino] imidazole-4-carboxamide isomerase of Caulobacter sp. (strain K31).